The primary structure comprises 396 residues: Protein BOP3 (396 aa).

Disordered regions lie at residues 1–22 (MSTF…NNVN), 98–126 (GVPA…ENLP), 145–168 (PTPM…GISH), 203–239 (VARR…KFTN), 254–274 (RDQQ…QQDL), and 355–396 (REGR…LNST). Composition is skewed to polar residues over residues 111-124 (QPHN…SSEN), 159-168 (ASSSTGGISH), and 210-230 (GTKS…SRNL). Over residues 355–369 (REGRQVHDDLDDRTC) the composition is skewed to basic and acidic residues. Residues 370–396 (SESSSRNESPVRTITKDNSVGKILNST) are compositionally biased toward polar residues.

It localises to the cytoplasm. Its subcellular location is the nucleus. In terms of biological role, involved in resistance to methylmercury. Overexpression suppresses a PAM1-SLV3 double null mutation. This is Protein BOP3 (BOP3) from Saccharomyces cerevisiae (strain ATCC 204508 / S288c) (Baker's yeast).